Here is a 513-residue protein sequence, read N- to C-terminus: ATP synthase subunit alpha (513 aa).

Residue 169–176 (GDRQTGKT) participates in ATP binding.

Belongs to the ATPase alpha/beta chains family. In terms of assembly, F-type ATPases have 2 components, CF(1) - the catalytic core - and CF(0) - the membrane proton channel. CF(1) has five subunits: alpha(3), beta(3), gamma(1), delta(1), epsilon(1). CF(0) has three main subunits: a(1), b(2) and c(9-12). The alpha and beta chains form an alternating ring which encloses part of the gamma chain. CF(1) is attached to CF(0) by a central stalk formed by the gamma and epsilon chains, while a peripheral stalk is formed by the delta and b chains.

The protein localises to the cell inner membrane. The enzyme catalyses ATP + H2O + 4 H(+)(in) = ADP + phosphate + 5 H(+)(out). Its function is as follows. Produces ATP from ADP in the presence of a proton gradient across the membrane. The alpha chain is a regulatory subunit. The sequence is that of ATP synthase subunit alpha from Aliivibrio fischeri (strain ATCC 700601 / ES114) (Vibrio fischeri).